The sequence spans 71 residues: Palustrin-Ca (71 aa).

The N-terminal stretch at 1 to 22 is a signal peptide; it reads MFTLKKSLLLLFFLGTISLSLC. A propeptide spanning residues 23–40 is cleaved from the precursor; it reads EQERDADGDEGEVEEVKR. Cysteine 63 and cysteine 69 are disulfide-bonded.

The protein belongs to the frog skin active peptide (FSAP) family. Brevinin subfamily. In terms of tissue distribution, expressed by the skin glands.

The protein localises to the secreted. Its subcellular location is the target cell membrane. Its function is as follows. Antibacterial peptide with amphipathic alpha-helical structure that exhibits potent broad-spectrum activity against Gram-positive and -negative bacteria. It is active against Listeria ATCC 54004 (MIC=30 ug/ml), S.aureus ATCC 25923 (MIC=7.8 ug/ml), S.suis 2 CVCC 606 (MIC=31.25 ug/ml), B.subtilis ADB403 (30 ug/ml), K.pneumoniae ATCC 700603 (MIC=60 ug/ml) and P.aeruginosa ATCC 227853 (MIC=30 ug/ml). Does not show activity against Salmonella ATCC 20020 and the fungus Candida albicans. Is also cytotoxic to HeLa cells at high concentrations. In addition, shows a strong antitumor activity but only a little hemolytic activity. Despite the presence of a Gly residue at position 10, this alpha-helical peptide remains relatively rigid, not exhibiting any significant flexibility during the molecular dynamics simulation. The peptide shows a preference for a position parallel to the target membrane that suggests it exerts its antimicrobial activity through a non-pore-forming mechanism of action, such as the carpet model or the interfacial activity model. This is Palustrin-Ca from Aquarana catesbeiana (American bullfrog).